A 267-amino-acid polypeptide reads, in one-letter code: Multivesicular body subunit 12A (267 aa).

An MABP domain is found at 7–146 (AAPLSGVGWA…SFAIWCKKGA (140 aa)). The short motif at 154-159 (PVPKPR) is the SH3-binding element. Residues 210–259 (MDGVPFTLHPKFERSPKSDSSAILTDLTVKSLADIEKEYNYTFVVERTAA) form the UMA domain.

This sequence belongs to the MVB12 family. As to quaternary structure, component of the ESCRT-I complex (endosomal sorting complex required for transport I).

The protein resides in the cytoplasm. Its subcellular location is the endosome. It is found in the late endosome membrane. Component of the ESCRT-I complex, a regulator of vesicular trafficking process. Required for the sorting of endocytic ubiquitinated cargos into multivesicular bodies. This Gallus gallus (Chicken) protein is Multivesicular body subunit 12A (MVB12A).